The sequence spans 517 residues: uncharacterized protein (517 aa).

10 helical membrane-spanning segments follow: residues 35–55 (FSLIVLSFIVSFFLIVAIPGI), 81–101 (IAIYTLAALAFSFCMSVGVFN), 102–122 (IGISGQMMAGANFGFMMILKV), 135–155 (IITILLMILGSVTVAMVVAAL), 164–184 (VVSAIMLNWVIVLVSAYLVGT), 223–243 (LVIAIAAAIFIAVLMKFTVFG), 268–288 (FLSFVISGILSGLLAAVVYTA), 302–322 (FGITSVPITGFDGIAIGLIAL), 328–348 (IVIVSTIISFVTIGAKPAGLN), and 352–372 (ASLVLGIMMYFAAIYNLMIYI).

The protein resides in the cell membrane. This is an uncharacterized protein from Mycoplasma pneumoniae (strain ATCC 29342 / M129 / Subtype 1) (Mycoplasmoides pneumoniae).